A 651-amino-acid polypeptide reads, in one-letter code: MSKIIELPEVLANQIAAGEVIERPASVVKELVENAIDADSSQITIEIEESGLKKIQVTDNGQGIEQADVIMSLRRHATSKIKKQSDLFRIRTLGFRGEALPSIASISRLTLKTATKGEIYGTLLIANGGKIEKEEAISTPIGTKVSVENLFFNTPARLKYMKSLQAELAHIIDVINRLSLAHPEIAFTLINDGRELTKTAGKGDLRQALAGIYGVTIAKKMVEISNADLDFEVSGYISLPELTRANRNYITILINGRYIKNFLLNRAILDGYGSKLMVGRFPIAVIDIQIDPYLADVNVHPTKQEVRISKEKELMNLVSSAIADSLREQELIPDALENLAKTSTNKKQKFEQTQLPLKQSNLYYDKTQNDFFLKETTVSEASSEFTVVDKAVNITDNVSGHSSVKYAQRQMRTCENKEHPSLTMTDKQQKRQLSRIVESLENEEKSTFPELEYFGQMHGTYLFAQGEGGLYIIDQHAAQERVKYEYYRDKIGEVDNSLQQLLVPYLFEFPANDFMTLQEKMSILNEVGIHLENYGENTFILREHPIWLQEKEIESAVYEMCDMLLLTNEVSIKKYRAELAIMMSCKRSIKANHTLDDYSARNLLIQLSQCKNPYNCPHGRPVLVNFTKADMEKMFRRIQENHTSLRELGKY.

Belongs to the DNA mismatch repair MutL/HexB family.

In terms of biological role, this protein is involved in the repair of mismatches in DNA. It is required for dam-dependent methyl-directed DNA mismatch repair. May act as a 'molecular matchmaker', a protein that promotes the formation of a stable complex between two or more DNA-binding proteins in an ATP-dependent manner without itself being part of a final effector complex. The polypeptide is DNA mismatch repair protein MutL (Streptococcus mutans serotype c (strain ATCC 700610 / UA159)).